The primary structure comprises 252 residues: Large ribosomal subunit protein uL29m (252 aa).

Lys-146 carries the N6-acetyllysine modification.

This sequence belongs to the universal ribosomal protein uL29 family. In terms of assembly, component of the mitochondrial ribosome large subunit (39S) which comprises a 16S rRNA and about 50 distinct proteins.

Its subcellular location is the mitochondrion. This is Large ribosomal subunit protein uL29m (MRPL47) from Bos taurus (Bovine).